The chain runs to 197 residues: Ion-translocating oxidoreductase complex subunit B (197 aa).

The hydrophobic stretch occupies residues 1 to 26; it reads MSTILIAIIALAALAAVFGAILGFAS. In terms of domain architecture, 4Fe-4S spans 32-90; it reads EADPIVDQIDSILPQTQCGQCGYPGCRPYAEAIANGDQINKCPPGGQATIEKLADLMGV. Residues Cys-49, Cys-52, Cys-57, Cys-73, Cys-114, Cys-117, Cys-120, Cys-124, Cys-144, Cys-147, Cys-150, and Cys-154 each contribute to the [4Fe-4S] cluster site. 4Fe-4S ferredoxin-type domains follow at residues 105–134 and 135–164; these read TVAF…GGTK and ALHT…MIPV.

This sequence belongs to the 4Fe4S bacterial-type ferredoxin family. RnfB subfamily. As to quaternary structure, the complex is composed of six subunits: RnfA, RnfB, RnfC, RnfD, RnfE and RnfG. [4Fe-4S] cluster serves as cofactor.

The protein resides in the cell inner membrane. In terms of biological role, part of a membrane-bound complex that couples electron transfer with translocation of ions across the membrane. The sequence is that of Ion-translocating oxidoreductase complex subunit B from Vibrio campbellii (strain ATCC BAA-1116).